A 244-amino-acid polypeptide reads, in one-letter code: MTDLVYEQPLNEKIRSYLRLEYLNKQLGNNLNHDHQHRCFYPLFSLCELSERCDYRNEVLKDIERNLLQLGKWQELDHVDSEQIEFYIQSLTQAREQLQRPERCGSQLKQDRFLSALRQRFGMPGACCNFDLPQLHFWLAKPWEERQQDYQAWISHFDPLLTPITLLLQLTRSTAHFDNATAHAGFYQGDSAQALSLVRVRVDAAHGCYPTISGHRNRYAIHFVQFDQQRHSDRSIEFLLATCA.

The protein belongs to the ZapD family. As to quaternary structure, interacts with FtsZ.

Its subcellular location is the cytoplasm. In terms of biological role, cell division factor that enhances FtsZ-ring assembly. Directly interacts with FtsZ and promotes bundling of FtsZ protofilaments, with a reduction in FtsZ GTPase activity. This is Cell division protein ZapD from Shewanella sp. (strain MR-4).